The chain runs to 106 residues: A-type ATP synthase subunit F (106 aa).

The protein belongs to the V-ATPase F subunit family. As to quaternary structure, has multiple subunits with at least A(3), B(3), C, D, E, F, H, I and proteolipid K(x).

It is found in the cell membrane. In terms of biological role, component of the A-type ATP synthase that produces ATP from ADP in the presence of a proton gradient across the membrane. In Haloferax volcanii (strain ATCC 29605 / DSM 3757 / JCM 8879 / NBRC 14742 / NCIMB 2012 / VKM B-1768 / DS2) (Halobacterium volcanii), this protein is A-type ATP synthase subunit F.